A 1048-amino-acid polypeptide reads, in one-letter code: Protein argonaute 7 (1048 aa).

Basic and acidic residues predominate over residues M1–D14. 2 disordered regions span residues M1 to G50 and K121 to P141. Residues A16–A37 show a composition bias toward gly residues. The span at M131 to P141 shows a compositional bias: basic residues. The 109-residue stretch at K422–E530 folds into the PAZ domain. The Piwi domain maps to L709–E1017.

The protein belongs to the argonaute family. Ago subfamily. As to expression, expressed in the reproductive shoot apex.

Involved in the RNA silencing pathway. May bind to short RNAs such as microRNAs (miRNAs) or short interfering RNAs (siRNAs), and represses the translation of mRNAs which are complementary to them. Regulates shoot apical meristem (SAM) initiation and maintenance and leaf polarization through the trans-acting siRNAS (ta-siRNAs) pathway which probably modulates the expression of the ARF2, ARF3, ARF4, ARF14 and ARF15 genes. The sequence is that of Protein argonaute 7 (AGO7) from Oryza sativa subsp. japonica (Rice).